The chain runs to 175 residues: MLDLGLSKMALIGVVALVVLGPERLPRVARTAGALFGRAQRYINDVKAEVSREIELDALRTMKSDFEQAARNVENTIHDNLREHERDLNAAWNSAVSSGDPAAADASGGLGATSDEPSWRTVAAAPAKRRNWRVKKTATPVWYKRATMRRTQVQSGAARVARHQPSSLRRPARFF.

A helical transmembrane segment spans residues 1 to 21 (MLDLGLSKMALIGVVALVVLG). Low complexity predominate over residues 99–115 (GDPAAADASGGLGATSD). The segment at 99–118 (GDPAAADASGGLGATSDEPS) is disordered.

Belongs to the TatB family. As to quaternary structure, the Tat system comprises two distinct complexes: a TatABC complex, containing multiple copies of TatA, TatB and TatC subunits, and a separate TatA complex, containing only TatA subunits. Substrates initially bind to the TatABC complex, which probably triggers association of the separate TatA complex to form the active translocon.

It is found in the cell inner membrane. Part of the twin-arginine translocation (Tat) system that transports large folded proteins containing a characteristic twin-arginine motif in their signal peptide across membranes. Together with TatC, TatB is part of a receptor directly interacting with Tat signal peptides. TatB may form an oligomeric binding site that transiently accommodates folded Tat precursor proteins before their translocation. This Burkholderia thailandensis (strain ATCC 700388 / DSM 13276 / CCUG 48851 / CIP 106301 / E264) protein is Sec-independent protein translocase protein TatB.